A 129-amino-acid chain; its full sequence is MSNIPAELKYASSHEWIRKEEDGSYTVGISEHAQELLGDMVFVELPEVGDTLSAGEDCAVAESVKAASDIYAPLSGEVLAVNEALEDSPELVNSDAFGDGWFFRVMPSDVAEIDNLLDAEGYQAVIDEE.

The Lipoyl-binding domain occupies 24 to 106; the sequence is SYTVGISEHA…FGDGWFFRVM (83 aa). Lysine 65 carries the post-translational modification N6-lipoyllysine.

This sequence belongs to the GcvH family. In terms of assembly, the glycine cleavage system is composed of four proteins: P, T, L and H. The cofactor is (R)-lipoate.

Its function is as follows. The glycine cleavage system catalyzes the degradation of glycine. The H protein shuttles the methylamine group of glycine from the P protein to the T protein. This is Glycine cleavage system H protein from Shewanella woodyi (strain ATCC 51908 / MS32).